Consider the following 107-residue polypeptide: Phosphoribosyl-ATP pyrophosphatase (107 aa).

Belongs to the PRA-PH family.

The protein resides in the cytoplasm. It carries out the reaction 1-(5-phospho-beta-D-ribosyl)-ATP + H2O = 1-(5-phospho-beta-D-ribosyl)-5'-AMP + diphosphate + H(+). Its pathway is amino-acid biosynthesis; L-histidine biosynthesis; L-histidine from 5-phospho-alpha-D-ribose 1-diphosphate: step 2/9. This chain is Phosphoribosyl-ATP pyrophosphatase, found in Azoarcus sp. (strain BH72).